We begin with the raw amino-acid sequence, 633 residues long: Threonine--tRNA ligase (633 aa).

A TGS domain is found at 1 to 61 (MINVYFSDNS…TEDCKFEVIT (61 aa)). Positions 242–533 (DHRKIGKELE…LIEHHSGKLP (292 aa)) are catalytic. Zn(2+) contacts are provided by C333, H384, and H510.

It belongs to the class-II aminoacyl-tRNA synthetase family. In terms of assembly, homodimer. Zn(2+) is required as a cofactor.

The protein localises to the cytoplasm. It catalyses the reaction tRNA(Thr) + L-threonine + ATP = L-threonyl-tRNA(Thr) + AMP + diphosphate + H(+). In terms of biological role, catalyzes the attachment of threonine to tRNA(Thr) in a two-step reaction: L-threonine is first activated by ATP to form Thr-AMP and then transferred to the acceptor end of tRNA(Thr). Also edits incorrectly charged L-seryl-tRNA(Thr). In Ehrlichia ruminantium (strain Welgevonden), this protein is Threonine--tRNA ligase.